Here is a 321-residue protein sequence, read N- to C-terminus: WD repeat-containing protein VIP3 (321 aa).

WD repeat units lie at residues 12–55 (AHED…LVRT), 58–97 (GHSL…TIAV), 100–140 (APPS…LIST), 156–195 (SSKK…LLHQ), 198–238 (GHNM…LLGS), 241–280 (GHTS…AIQT), and 283–319 (NHND…SLYD).

As to quaternary structure, component of the nuclear PAF1 complex (PAF1C), which consists of VIP2/ELF7/PAF1, VIP3/SKI8/WDR61, VIP4/LEO1, VIP5/RTF1, VIP6/ELF8/CTR9 and CDC73. Component of the cytoplasmic SKI complex, which consists of SKI2, SKI3 and VIP3/SKI8. Interacts with VIP4 and VIP6.

It localises to the nucleus. It is found in the cytoplasm. Its function is as follows. Component of the PAF1 complex (PAF1C) which is involved in histone modifications such as methylation on histone H3 'Lys-4' (H3K4me3). Involved in regulation of flowering time. Required for the expression of the flowering repressor and MADS box gene FLC. Required for histone H3 trimethylation on 'Lys-4' (H3K4me3) and histone dimethylation on 'Lys-36' (H3K36me2) at the FLC locus. Prevents trimethylation on 'Lys-27' (H3K27me3) at the same locus. Not required for meiotic recombination or progression. Component of the SKI complex which is thought to be involved in exosome-mediated RNA decay and associates with transcriptionally active genes in a manner dependent on PAF1 complex (PAF1C). Required for proper progression of cell differentiation process. The polypeptide is WD repeat-containing protein VIP3 (Arabidopsis thaliana (Mouse-ear cress)).